Reading from the N-terminus, the 87-residue chain is Gibberellin-regulated protein 8 (87 aa).

The signal sequence occupies residues 1–25 (MKLVVVQFFIISLLLTSSFSVLSSA).

The protein belongs to the GASA family. Post-translationally, six disulfide bonds may be present. In terms of tissue distribution, expressed in roots and developing seeds.

The protein localises to the secreted. Gibberellin-regulated protein that may function in hormonal controlled steps of development such as seed germination, flowering and seed maturation. In Arabidopsis thaliana (Mouse-ear cress), this protein is Gibberellin-regulated protein 8.